A 976-amino-acid polypeptide reads, in one-letter code: Probable alanine--tRNA ligase, chloroplastic/mitochondrial (976 aa).

The transit peptide at 1 to 54 (MPRPGFAHATAPALAHARARISPVARRRVVVMRTRVDGAAKSLVTQLRLALGST) directs the protein to the chloroplast and mitochondrion. Positions 71 to 95 (LGTATNDQSTGTRANPNAEGKDNSG) are disordered. The segment covering 73–85 (TATNDQSTGTRAN) has biased composition (polar residues).

Belongs to the class-II aminoacyl-tRNA synthetase family. As to quaternary structure, monomer. Requires Zn(2+) as cofactor.

It localises to the plastid. The protein localises to the chloroplast. It is found in the mitochondrion. It carries out the reaction tRNA(Ala) + L-alanine + ATP = L-alanyl-tRNA(Ala) + AMP + diphosphate. Catalyzes the attachment of alanine to tRNA(Ala) in a two-step reaction: alanine is first activated by ATP to form Ala-AMP and then transferred to the acceptor end of tRNA(Ala). Also edits incorrectly charged tRNA(Ala) via its editing domain. The chain is Probable alanine--tRNA ligase, chloroplastic/mitochondrial from Ostreococcus tauri.